Here is an 88-residue protein sequence, read N- to C-terminus: Large ribosomal subunit protein eL34 (88 aa).

It belongs to the eukaryotic ribosomal protein eL34 family.

The protein is Large ribosomal subunit protein eL34 of Saccharolobus solfataricus (strain ATCC 35092 / DSM 1617 / JCM 11322 / P2) (Sulfolobus solfataricus).